We begin with the raw amino-acid sequence, 84 residues long: RNA-binding protein Hfq (84 aa).

One can recognise a Sm domain in the interval 10–70 (DNVLNQVRKN…VSTIIPGKTL (61 aa)).

It belongs to the Hfq family. Homohexamer.

In terms of biological role, RNA chaperone that binds small regulatory RNA (sRNAs) and mRNAs to facilitate mRNA translational regulation in response to envelope stress, environmental stress and changes in metabolite concentrations. Also binds with high specificity to tRNAs. In Natranaerobius thermophilus (strain ATCC BAA-1301 / DSM 18059 / JW/NM-WN-LF), this protein is RNA-binding protein Hfq.